Reading from the N-terminus, the 229-residue chain is Multiple organellar RNA editing factor 5, chloroplastic/mitochondrial (229 aa).

The transit peptide at Met-1–Arg-57 directs the protein to the chloroplast and mitochondrion.

This sequence belongs to the MORF family. In terms of assembly, homodimer and heterodimers with MORF8/RIP1, MORF3/RIP3, MORF6/RIP6, MORF7/RIP7 and MORF9/RIP9.

The protein resides in the mitochondrion. It localises to the plastid. Its subcellular location is the chloroplast. Involved in organellar RNA editing. Required for the processing of few RNA editing sites in mitochondria. This Arabidopsis thaliana (Mouse-ear cress) protein is Multiple organellar RNA editing factor 5, chloroplastic/mitochondrial.